A 388-amino-acid chain; its full sequence is Methylthioribose-1-phosphate isomerase (388 aa).

The active-site Proton donor is the aspartate 252.

It belongs to the eIF-2B alpha/beta/delta subunits family. MtnA subfamily.

The protein resides in the cytoplasm. Its subcellular location is the nucleus. The catalysed reaction is 5-(methylsulfanyl)-alpha-D-ribose 1-phosphate = 5-(methylsulfanyl)-D-ribulose 1-phosphate. Its pathway is amino-acid biosynthesis; L-methionine biosynthesis via salvage pathway; L-methionine from S-methyl-5-thio-alpha-D-ribose 1-phosphate: step 1/6. In terms of biological role, catalyzes the interconversion of methylthioribose-1-phosphate (MTR-1-P) into methylthioribulose-1-phosphate (MTRu-1-P). This Verticillium alfalfae (strain VaMs.102 / ATCC MYA-4576 / FGSC 10136) (Verticillium wilt of alfalfa) protein is Methylthioribose-1-phosphate isomerase.